We begin with the raw amino-acid sequence, 194 residues long: Peptidyl-tRNA hydrolase (194 aa).

Y17 contacts tRNA. The active-site Proton acceptor is H22. 3 residues coordinate tRNA: Y68, N70, and N116.

This sequence belongs to the PTH family. In terms of assembly, monomer.

Its subcellular location is the cytoplasm. It carries out the reaction an N-acyl-L-alpha-aminoacyl-tRNA + H2O = an N-acyl-L-amino acid + a tRNA + H(+). In terms of biological role, hydrolyzes ribosome-free peptidyl-tRNAs (with 1 or more amino acids incorporated), which drop off the ribosome during protein synthesis, or as a result of ribosome stalling. Catalyzes the release of premature peptidyl moieties from peptidyl-tRNA molecules trapped in stalled 50S ribosomal subunits, and thus maintains levels of free tRNAs and 50S ribosomes. The protein is Peptidyl-tRNA hydrolase of Marinomonas sp. (strain MWYL1).